The primary structure comprises 374 residues: Arrestin domain-containing protein 15 (374 aa).

The interval 344–374 is disordered; it reads HHLNRSKAKVSKTEQQQRKTRNIVEENPYFR.

It belongs to the arrestin family.

In Caenorhabditis elegans, this protein is Arrestin domain-containing protein 15 (arrd-15).